The sequence spans 94 residues: Small ribosomal subunit protein bS18 (94 aa).

The protein belongs to the bacterial ribosomal protein bS18 family. In terms of assembly, part of the 30S ribosomal subunit. Forms a tight heterodimer with protein bS6.

Functionally, binds as a heterodimer with protein bS6 to the central domain of the 16S rRNA, where it helps stabilize the platform of the 30S subunit. This is Small ribosomal subunit protein bS18 from Rickettsia bellii (strain OSU 85-389).